We begin with the raw amino-acid sequence, 512 residues long: Rab11 family-interacting protein 2 (512 aa).

The 120-residue stretch at 1–120 (MMLSEQAQKW…DKQRRKTEWF (120 aa)) folds into the C2 domain. The segment at 15–102 (VQVTVLQAKD…GLDKFLGQVA (88 aa)) is necessary for its cellular translocation to the plasma membrane. Disordered regions lie at residues 169–239 (DKMK…MSSE) and 262–285 (VPESGSLKSPHRRTLSFDTSKMNQ). Polar residues predominate over residues 178-188 (GTFSDTSSAII). Residues 226–236 (HSMSDLSGSHM) are compositionally biased toward low complexity. Ser227 carries the phosphoserine; by MARK2 modification. Ser277 is subject to Phosphoserine. An NPF 1 motif is present at residues 323-325 (NPF). Basic and acidic residues predominate over residues 361–374 (ERVTGKKDSRRSDK). Residues 361–392 (ERVTGKKDSRRSDKLNNGGSDSPCDLKSPNAF) form a disordered region. 2 consecutive short sequence motifs (NPF) follow at residues 406 to 408 (NPF) and 440 to 442 (NPF). One can recognise an FIP-RBD domain in the interval 437–499 (PDSNPFDATA…EETPSILRVP (63 aa)). Positions 465–512 (ELLRRKDTHIRELEDYIDNLLVRVMEETPSILRVPYEPSRKAGKFSNS) are necessary for interaction with AP2A1, RAB11A, subcellular location, endocytosis activity and homooligomerization.

In terms of assembly, homooligomerizes in a Rab11-independent manner. Forms a heterooligomeric complex with RAB11FIP4. Interacts with AP2A1, MYO5B, RAB25 and REPS1. Interacts with RAB11A and RAB11B (activated GTP-bound form). Interacts with NPC1L1. Interacts (via NPF motifs) with EHD1 and EHD3. Interacts with TICAM2; this interaction directs RAB11FIP2 to the phagosome. Interacts with RAB14 and RAB25 (GTP-bound forms). In terms of processing, phosphorylation at Ser-227 by MARK2 regulates epithelial cell polarity.

The protein resides in the cell projection. It is found in the phagocytic cup. Its subcellular location is the cell membrane. It localises to the recycling endosome membrane. A Rab11 effector binding preferentially phosphatidylinositol 3,4,5-trisphosphate (PtdInsP3) and phosphatidic acid (PA) and acting in the regulation of the transport of vesicles from the endosomal recycling compartment (ERC) to the plasma membrane. Involved in insulin granule exocytosis. Also involved in receptor-mediated endocytosis and membrane trafficking of recycling endosomes, probably originating from clathrin-coated vesicles. Required in a complex with MYO5B and RAB11 for the transport of NPC1L1 to the plasma membrane. Also acts as a regulator of cell polarity. Plays an essential role in phagocytosis through a mechanism involving TICAM2, RAC1 and CDC42 Rho GTPases for controlling actin-dynamics. This Homo sapiens (Human) protein is Rab11 family-interacting protein 2 (RAB11FIP2).